A 63-amino-acid chain; its full sequence is Alpha-conotoxin-like Am1.6 (63 aa).

Residues 1-21 (MGMRMMFTVFLLVVLATTVVS) form the signal peptide. Residues 22-46 (FTSYRASDGRNAAAKASDLIALTVR) constitute a propeptide that is removed on maturation. Residues 50-52 (SRP) are ser-Xaa-Pro motif, crucial for potent interaction with nAChR.

It belongs to the conotoxin A superfamily. Is not hydroxylated. In terms of processing, contains 2 disulfide bonds. As to expression, expressed by the venom duct.

It localises to the secreted. Functionally, alpha-conotoxins act on postsynaptic membranes, they bind to the nicotinic acetylcholine receptors (nAChR) and thus inhibit them. The sequence is that of Alpha-conotoxin-like Am1.6 from Conus amadis (Amadis cone).